We begin with the raw amino-acid sequence, 353 residues long: uncharacterized protein (353 aa).

A signal peptide spans 1–24; the sequence is MRVVKRIAVACYLGITIFSGIAFG.

This sequence belongs to the chlamydial CPn_1058/CT_355/TC_0634 family.

This is an uncharacterized protein from Chlamydia muridarum (strain MoPn / Nigg).